The following is a 162-amino-acid chain: Nitric oxide synthase, inducible (162 aa).

The span at 24–37 (LQYHSLSKQQNESP) shows a compositional bias: polar residues. The tract at residues 24 to 65 (LQYHSLSKQQNESPQPLVGTGKKSPESLVKPDATPLSSPRHV) is disordered. Zn(2+)-binding residues include Cys-90 and Cys-95. Ser-98 lines the (6R)-L-erythro-5,6,7,8-tetrahydrobiopterin pocket. Glu-132 contacts L-arginine. An FAD-binding site is contributed by His-160.

Belongs to the NOS family. As to quaternary structure, homodimer. Interacts with NHERF1. Interacts with GAPDH; induced by oxidatively-modified low-densitity lipoprotein (LDL(ox)). Interacts with S100A8 and S100A9 to form the iNOS-S100A8/9 transnitrosylase complex. Interacts with SPSB1, SPSB2 and SPSB4. Interacts with ELOC and CUL5 in the presence of SPSB1 or SPSB2 or SPSB4. Forms a complex with ASL, ASS1 and HSP90AA1; the complex regulates cell-autonomous L-arginine synthesis and citrulline recycling while channeling extracellular L-arginine to nitric oxide synthesis pathway. It depends on heme b as a cofactor. FAD serves as cofactor. The cofactor is FMN. (6R)-L-erythro-5,6,7,8-tetrahydrobiopterin is required as a cofactor. Post-translationally, polyubiquitinated; mediated by SPSB1, SPSB2 and SPSB4, leading to proteasomal degradation.

It localises to the cytoplasm. The protein resides in the cytosol. The enzyme catalyses 2 L-arginine + 3 NADPH + 4 O2 + H(+) = 2 L-citrulline + 2 nitric oxide + 3 NADP(+) + 4 H2O. Regulated by calcium/calmodulin. In terms of biological role, produces nitric oxide (NO) which is a messenger molecule with diverse functions throughout the body. In macrophages, NO mediates tumoricidal and bactericidal actions. Also has nitrosylase activity and mediates cysteine S-nitrosylation of cytoplasmic target proteins such PTGS2/COX2. As component of the iNOS-S100A8/9 transnitrosylase complex involved in the selective inflammatory stimulus-dependent S-nitrosylation of GAPDH implicated in regulation of the GAIT complex activity and probably multiple targets including ANXA5, EZR, MSN and VIM. Involved in inflammation, enhances the synthesis of pro-inflammatory mediators such as IL6 and IL8. This is Nitric oxide synthase, inducible (NOS2) from Macaca mulatta (Rhesus macaque).